Consider the following 314-residue polypeptide: Methionyl-tRNA formyltransferase (314 aa).

Position 110–113 (110–113 (SLLP)) interacts with (6S)-5,6,7,8-tetrahydrofolate.

The protein belongs to the Fmt family.

The enzyme catalyses L-methionyl-tRNA(fMet) + (6R)-10-formyltetrahydrofolate = N-formyl-L-methionyl-tRNA(fMet) + (6S)-5,6,7,8-tetrahydrofolate + H(+). In terms of biological role, attaches a formyl group to the free amino group of methionyl-tRNA(fMet). The formyl group appears to play a dual role in the initiator identity of N-formylmethionyl-tRNA by promoting its recognition by IF2 and preventing the misappropriation of this tRNA by the elongation apparatus. This chain is Methionyl-tRNA formyltransferase, found in Dichelobacter nodosus (strain VCS1703A).